Consider the following 386-residue polypeptide: Nucleosome assembly protein 1-like 4 (386 aa).

The disordered stretch occupies residues 1–29 (MADNSFSDGVPSDSLEAAKNASNTEKLTD). Ala2 is subject to N-acetylalanine. 3 positions are modified to phosphoserine: Ser5, Ser7, and Ser12. Residues 20–29 (NASNTEKLTD) show a composition bias toward polar residues. Residue Ser49 is modified to Phosphoserine. A Phosphothreonine modification is found at Thr51. Phosphoserine occurs at positions 53 and 54. Thr58 carries the post-translational modification Phosphothreonine. Lys105 bears the N6-acetyllysine mark. Ser125 is subject to Phosphoserine. An N6-acetyllysine modification is found at Lys146. The short motif at 265–271 (IKKKQKH) is the Nuclear localization signal element. Residue Ser304 is modified to Phosphoserine. Positions 339–370 (AIEDDDNFEEGEEGEEEELEGDEEAEDDDDAE) are enriched in acidic residues. The segment at 339–386 (AIEDDDNFEEGEEGEEEELEGDEEAEDDDDAEINPKKEPSQPSECKQQ) is disordered.

It belongs to the nucleosome assembly protein (NAP) family. Interacts with core (H2A, H2B, H3, H4) and linker (H1) histones. In terms of processing, polyglutamylated and polyglycylated. These 2 modifications occur exclusively on glutamate residues and result in either polyglutamate or polyglycine chains on the gamma-carboxyl group. Both modifications can coexist on the same protein on adjacent residues, and lowering polyglycylation levels increases polyglutamylation, and reciprocally. Polyglutamylated by TTLL4. Post-translationally, phosphorylated at the G0/G1 boundary but it is not phosphorylated in S-phase. Phosphorylated protein remains in the cytoplasm in a complex with histones during the G0/G1 transition, whereas dephosphorylation triggers its transport into the nucleus at the G1/S-boundary.

The protein localises to the nucleus. It is found in the cytoplasm. Its function is as follows. Acts as a histone chaperone in nucleosome assembly. The protein is Nucleosome assembly protein 1-like 4 (NAP1L4) of Bos taurus (Bovine).